A 574-amino-acid polypeptide reads, in one-letter code: Proline--tRNA ligase (574 aa).

It belongs to the class-II aminoacyl-tRNA synthetase family. ProS type 1 subfamily. In terms of assembly, homodimer.

Its subcellular location is the cytoplasm. It carries out the reaction tRNA(Pro) + L-proline + ATP = L-prolyl-tRNA(Pro) + AMP + diphosphate. In terms of biological role, catalyzes the attachment of proline to tRNA(Pro) in a two-step reaction: proline is first activated by ATP to form Pro-AMP and then transferred to the acceptor end of tRNA(Pro). As ProRS can inadvertently accommodate and process non-cognate amino acids such as alanine and cysteine, to avoid such errors it has two additional distinct editing activities against alanine. One activity is designated as 'pretransfer' editing and involves the tRNA(Pro)-independent hydrolysis of activated Ala-AMP. The other activity is designated 'posttransfer' editing and involves deacylation of mischarged Ala-tRNA(Pro). The misacylated Cys-tRNA(Pro) is not edited by ProRS. This Thioalkalivibrio sulfidiphilus (strain HL-EbGR7) protein is Proline--tRNA ligase.